A 299-amino-acid polypeptide reads, in one-letter code: Small ribosomal subunit biogenesis GTPase RsgA (299 aa).

In terms of domain architecture, CP-type G spans 64–225 (KNEMIRPPVA…VGDTPGFSSL (162 aa)). GTP contacts are provided by residues 113-116 (TKTD) and 168-176 (GQTGAGKST). 4 residues coordinate Zn(2+): C249, C254, H256, and C262.

Belongs to the TRAFAC class YlqF/YawG GTPase family. RsgA subfamily. Monomer. Associates with 30S ribosomal subunit, binds 16S rRNA. Requires Zn(2+) as cofactor.

The protein localises to the cytoplasm. Functionally, one of several proteins that assist in the late maturation steps of the functional core of the 30S ribosomal subunit. Helps release RbfA from mature subunits. May play a role in the assembly of ribosomal proteins into the subunit. Circularly permuted GTPase that catalyzes slow GTP hydrolysis, GTPase activity is stimulated by the 30S ribosomal subunit. The polypeptide is Small ribosomal subunit biogenesis GTPase RsgA (Latilactobacillus sakei subsp. sakei (strain 23K) (Lactobacillus sakei subsp. sakei)).